Here is a 667-residue protein sequence, read N- to C-terminus: Mannosyl-oligosaccharide alpha-1,2-mannosidase IA (667 aa).

Over 1 to 18 the chain is Cytoplasmic; sequence MYRISPIGRKSNFHSREK. Residues 19–39 traverse the membrane as a helical; Signal-anchor for type II membrane protein segment; sequence CLIGLVLVTLCFLCFGGIFLL. Residues 40–667 lie on the Lumenal side of the membrane; sequence PDNFGSDRVL…PVTLPVSNAS (628 aa). A disordered region spans residues 154–192; it reads GDNAASQASSHPQSSAQQHNQQQPQLPLGGGGNDQAPDT. The span at 156 to 178 shows a compositional bias: low complexity; it reads NAASQASSHPQSSAQQHNQQQPQ. Asparagine 278 is a glycosylation site (N-linked (GlcNAc...) asparagine). A disulfide bridge links cysteine 483 with cysteine 515. Glutamate 529 (proton donor) is an active-site residue. Threonine 640 provides a ligand contact to Ca(2+).

It belongs to the glycosyl hydrolase 47 family. The cofactor is Ca(2+). Mg(2+) is required as a cofactor. Complex spatial distribution during embryogenesis, including expression in lobula plate giant neurons. Also expressed in adult wing and eyes.

Its subcellular location is the golgi apparatus membrane. It catalyses the reaction N(4)-(alpha-D-Man-(1-&gt;2)-alpha-D-Man-(1-&gt;2)-alpha-D-Man-(1-&gt;3)-[alpha-D-Man-(1-&gt;2)-alpha-D-Man-(1-&gt;3)-[alpha-D-Man-(1-&gt;2)-alpha-D-Man-(1-&gt;6)]-alpha-D-Man-(1-&gt;6)]-beta-D-Man-(1-&gt;4)-beta-D-GlcNAc-(1-&gt;4)-beta-D-GlcNAc)-L-asparaginyl-[protein] (N-glucan mannose isomer 9A1,2,3B1,2,3) + 4 H2O = N(4)-(alpha-D-Man-(1-&gt;3)-[alpha-D-Man-(1-&gt;3)-[alpha-D-Man-(1-&gt;6)]-alpha-D-Man-(1-&gt;6)]-beta-D-Man-(1-&gt;4)-beta-D-GlcNAc-(1-&gt;4)-beta-D-GlcNAc)-L-asparaginyl-[protein] (N-glucan mannose isomer 5A1,2) + 4 beta-D-mannose. The catalysed reaction is N(4)-(alpha-D-Man-(1-&gt;2)-alpha-D-Man-(1-&gt;2)-alpha-D-Man-(1-&gt;3)-[alpha-D-Man-(1-&gt;3)-[alpha-D-Man-(1-&gt;2)-alpha-D-Man-(1-&gt;6)]-alpha-D-Man-(1-&gt;6)]-beta-D-Man-(1-&gt;4)-beta-D-GlcNAc-(1-&gt;4)-beta-D-GlcNAc)-L-asparaginyl-[protein] (N-glucan mannose isomer 8A1,2,3B1,3) + 3 H2O = N(4)-(alpha-D-Man-(1-&gt;3)-[alpha-D-Man-(1-&gt;3)-[alpha-D-Man-(1-&gt;6)]-alpha-D-Man-(1-&gt;6)]-beta-D-Man-(1-&gt;4)-beta-D-GlcNAc-(1-&gt;4)-beta-D-GlcNAc)-L-asparaginyl-[protein] (N-glucan mannose isomer 5A1,2) + 3 beta-D-mannose. It participates in protein modification; protein glycosylation. Functionally, involved in the maturation of Asn-linked oligosaccharides. Progressively trim alpha-1,2-linked mannose residues from Man(9)GlcNAc(2) to produce Man(5)GlcNAc(2). This chain is Mannosyl-oligosaccharide alpha-1,2-mannosidase IA, found in Drosophila melanogaster (Fruit fly).